Here is a 900-residue protein sequence, read N- to C-terminus: Protein translocase subunit SecA (900 aa).

ATP contacts are provided by residues Gln-87, 105–109 (GEGKT), and Asp-512. The tract at residues 849 to 900 (ERLAQQQQFSHQEEDSLNTGSPAQADRKIGRNDPCPCGSGKKYKQCHGRLQK) is disordered. Cys-883, Cys-885, Cys-894, and His-895 together coordinate Zn(2+). Residues 889-900 (KKYKQCHGRLQK) are compositionally biased toward basic residues.

It belongs to the SecA family. In terms of assembly, monomer and homodimer. Part of the essential Sec protein translocation apparatus which comprises SecA, SecYEG and auxiliary proteins SecDF-YajC and YidC. It depends on Zn(2+) as a cofactor.

It is found in the cell inner membrane. Its subcellular location is the cytoplasm. The catalysed reaction is ATP + H2O + cellular proteinSide 1 = ADP + phosphate + cellular proteinSide 2.. In terms of biological role, part of the Sec protein translocase complex. Interacts with the SecYEG preprotein conducting channel. Has a central role in coupling the hydrolysis of ATP to the transfer of proteins into and across the cell membrane, serving both as a receptor for the preprotein-SecB complex and as an ATP-driven molecular motor driving the stepwise translocation of polypeptide chains across the membrane. This is Protein translocase subunit SecA from Pectobacterium atrosepticum (strain SCRI 1043 / ATCC BAA-672) (Erwinia carotovora subsp. atroseptica).